The sequence spans 179 residues: ATP synthase subunit b (179 aa).

A helical transmembrane segment spans residues 29 to 48 (VINLAILIGVLVYFGRGVLG).

Belongs to the ATPase B chain family. As to quaternary structure, F-type ATPases have 2 components, F(1) - the catalytic core - and F(0) - the membrane proton channel. F(1) has five subunits: alpha(3), beta(3), gamma(1), delta(1), epsilon(1). F(0) has four main subunits: a(1), b(1), b'(1) and c(10-14). The alpha and beta chains form an alternating ring which encloses part of the gamma chain. F(1) is attached to F(0) by a central stalk formed by the gamma and epsilon chains, while a peripheral stalk is formed by the delta, b and b' chains.

The protein resides in the cellular thylakoid membrane. Functionally, f(1)F(0) ATP synthase produces ATP from ADP in the presence of a proton or sodium gradient. F-type ATPases consist of two structural domains, F(1) containing the extramembraneous catalytic core and F(0) containing the membrane proton channel, linked together by a central stalk and a peripheral stalk. During catalysis, ATP synthesis in the catalytic domain of F(1) is coupled via a rotary mechanism of the central stalk subunits to proton translocation. In terms of biological role, component of the F(0) channel, it forms part of the peripheral stalk, linking F(1) to F(0). Its function is as follows. The complex from the organism is particularly stable to disruption and remains functional after 6 hrs at 55 degrees Celsius. The protein is ATP synthase subunit b of Thermosynechococcus vestitus (strain NIES-2133 / IAM M-273 / BP-1).